Here is a 744-residue protein sequence, read N- to C-terminus: MSENHDAVVYNTNAENGGGCPVAHRRAPHPTQGGGNRGWWPNRLNLKILAKNPAVANPLGGEFTYAEAFRTLDLAAVKQDIAAVLTTSQAWWPADYGHYGPFIIRMAWHSAGTYRISDGRGGAGAGQLRFAPLNSWPDNANLDKARRLLWPVKKKYGQKISWADLMILAGNVALESMGFETFGFAGGRVDVWEPDEDVYWGPETTWLDDERYTGDRELENPLAAVQMGLIYVNPEGPNGNPDPIAAARDIRETFRRMAMNDEETVALIAGGHTFGKTHGAANPDEHVGPEPEGAPIEEQGFGWTSTFGTGRGGDTITSGLEGAWTNTPVSWDNSFFEILFSYEWELTKSPAGANQWKPKDGAGAGTVPDAHDAAKSHAPTMLTTDLALRFDPIYEPISRRFLENPSAFADAFARAWFKLTHRDLGPVARYLGPEVPTETLLWQDPLPAVAHELIDAADVATLKGQILASGLSVSQLVSTAWASASTFRGGDKRGGANGARIRLEPQRGWEVNEPDQLAAVLRTLTRIQEVFNAAQTGGKQVSLADLIVLAGGVAVEQAAANAGFDVEVPFAPGRTDASQEQTDVESFAVLEPTADGFRNYLGKGHRLPAEYLLLDRANQLTLSAPELTVLVGGLRVLGANYQQSPLGVFTATPGSLTNDFFVNLLELGTTWKTTSEDANTFEGRDAATGKVRWTGSRADLVFGSNSELRALAEVYASDDAREKFVHDFVAAWVKVMNLDRFDLV.

A cross-link (tryptophyl-tyrosyl-methioninium (Trp-Tyr) (with M-257)) is located at residues Trp108 to Tyr231. The Proton acceptor role is filled by His109. Residues Tyr231–Met257 constitute a cross-link (tryptophyl-tyrosyl-methioninium (Tyr-Met) (with W-108)). His272 is a heme b binding site. A disordered region spans residues Ala353 to Asp372.

The protein belongs to the peroxidase family. Peroxidase/catalase subfamily. Homodimer or homotetramer. Requires heme b as cofactor. Post-translationally, formation of the three residue Trp-Tyr-Met cross-link is important for the catalase, but not the peroxidase activity of the enzyme.

The catalysed reaction is H2O2 + AH2 = A + 2 H2O. The enzyme catalyses 2 H2O2 = O2 + 2 H2O. In terms of biological role, bifunctional enzyme with both catalase and broad-spectrum peroxidase activity. The protein is Catalase-peroxidase of Frankia casuarinae (strain DSM 45818 / CECT 9043 / HFP020203 / CcI3).